A 352-amino-acid polypeptide reads, in one-letter code: Homoserine O-acetyltransferase (352 aa).

The 294-residue stretch at 37-330 folds into the AB hydrolase-1 domain; that stretch reads NAVLVCHALT…APHGHDTFLI (294 aa). Serine 133 serves as the catalytic Nucleophile. Arginine 206 is a binding site for substrate. Residues aspartate 296 and histidine 325 contribute to the active site. Aspartate 326 is a binding site for substrate.

The protein belongs to the AB hydrolase superfamily. MetX family. As to quaternary structure, homodimer.

The protein resides in the cytoplasm. The catalysed reaction is L-homoserine + acetyl-CoA = O-acetyl-L-homoserine + CoA. Its pathway is amino-acid biosynthesis; L-methionine biosynthesis via de novo pathway; O-acetyl-L-homoserine from L-homoserine: step 1/1. Functionally, transfers an acetyl group from acetyl-CoA to L-homoserine, forming acetyl-L-homoserine. The protein is Homoserine O-acetyltransferase of Salinibacter ruber (strain DSM 13855 / M31).